A 271-amino-acid chain; its full sequence is Formamidopyrimidine-DNA glycosylase (271 aa).

Pro2 functions as the Schiff-base intermediate with DNA in the catalytic mechanism. Glu3 (proton donor) is an active-site residue. The Proton donor; for beta-elimination activity role is filled by Lys58. His90, Arg108, and Arg151 together coordinate DNA. Residues 236–271 (QVYGRDGQPCHRDDGGTIRRFAQGGRSTWYCPRCQR) form an FPG-type; degenerate zinc finger. Residue Arg261 is the Proton donor; for delta-elimination activity of the active site.

This sequence belongs to the FPG family. In terms of assembly, monomer. Zn(2+) is required as a cofactor.

It catalyses the reaction Hydrolysis of DNA containing ring-opened 7-methylguanine residues, releasing 2,6-diamino-4-hydroxy-5-(N-methyl)formamidopyrimidine.. The catalysed reaction is 2'-deoxyribonucleotide-(2'-deoxyribose 5'-phosphate)-2'-deoxyribonucleotide-DNA = a 3'-end 2'-deoxyribonucleotide-(2,3-dehydro-2,3-deoxyribose 5'-phosphate)-DNA + a 5'-end 5'-phospho-2'-deoxyribonucleoside-DNA + H(+). Involved in base excision repair of DNA damaged by oxidation or by mutagenic agents. Acts as a DNA glycosylase that recognizes and removes damaged bases. Has a preference for oxidized purines, such as 7,8-dihydro-8-oxoguanine (8-oxoG). Has AP (apurinic/apyrimidinic) lyase activity and introduces nicks in the DNA strand. Cleaves the DNA backbone by beta-delta elimination to generate a single-strand break at the site of the removed base with both 3'- and 5'-phosphates. In Erythrobacter litoralis (strain HTCC2594), this protein is Formamidopyrimidine-DNA glycosylase.